A 461-amino-acid polypeptide reads, in one-letter code: Argininosuccinate lyase (461 aa).

The protein belongs to the lyase 1 family. Argininosuccinate lyase subfamily.

It is found in the cytoplasm. The catalysed reaction is 2-(N(omega)-L-arginino)succinate = fumarate + L-arginine. The protein operates within amino-acid biosynthesis; L-arginine biosynthesis; L-arginine from L-ornithine and carbamoyl phosphate: step 3/3. In Nitrosomonas europaea (strain ATCC 19718 / CIP 103999 / KCTC 2705 / NBRC 14298), this protein is Argininosuccinate lyase.